Reading from the N-terminus, the 208-residue chain is Imidazole glycerol phosphate synthase subunit HisH (208 aa).

In terms of domain architecture, Glutamine amidotransferase type-1 spans 1–206 (MIVIIDYDTG…KEVTYSCKSS (206 aa)). The active-site Nucleophile is cysteine 79. Catalysis depends on residues histidine 181 and glutamate 183.

As to quaternary structure, heterodimer of HisH and HisF.

It localises to the cytoplasm. It catalyses the reaction 5-[(5-phospho-1-deoxy-D-ribulos-1-ylimino)methylamino]-1-(5-phospho-beta-D-ribosyl)imidazole-4-carboxamide + L-glutamine = D-erythro-1-(imidazol-4-yl)glycerol 3-phosphate + 5-amino-1-(5-phospho-beta-D-ribosyl)imidazole-4-carboxamide + L-glutamate + H(+). It carries out the reaction L-glutamine + H2O = L-glutamate + NH4(+). It functions in the pathway amino-acid biosynthesis; L-histidine biosynthesis; L-histidine from 5-phospho-alpha-D-ribose 1-diphosphate: step 5/9. In terms of biological role, IGPS catalyzes the conversion of PRFAR and glutamine to IGP, AICAR and glutamate. The HisH subunit catalyzes the hydrolysis of glutamine to glutamate and ammonia as part of the synthesis of IGP and AICAR. The resulting ammonia molecule is channeled to the active site of HisF. The protein is Imidazole glycerol phosphate synthase subunit HisH of Listeria monocytogenes serotype 4a (strain HCC23).